The sequence spans 37 residues: GFFSLIKGVAKIATKGLAKNLGKMGLDLVGCKISKEC.

Cysteine 31 and cysteine 37 are oxidised to a cystine.

In terms of tissue distribution, expressed by the skin glands.

Its subcellular location is the secreted. Functionally, mast cell degranulating peptide. Causes histamine release from rat peritoneal mast cells in vitro. Has antibacterial activity against the Gram-negative bacterium E.coli K12 and Gram-positive bacterium M.luteus NCT C2665. The polypeptide is Esculentin-2SE (Lithobates sevosus (Dusky gopher frog)).